Consider the following 215-residue polypeptide: Glutathione S-transferase D4 (215 aa).

The region spanning 1-80 (MDFYYSPRSS…YLVEKYGKDD (80 aa)) is the GST N-terminal domain. Residues S9, 50 to 52 (HTI), and 64 to 66 (ESR) each bind glutathione. The 122-residue stretch at 86–207 (DPQKRALINQ…KGLLQMKTMY (122 aa)) folds into the GST C-terminal domain.

This sequence belongs to the GST superfamily. Delta family. In terms of assembly, homodimer.

The catalysed reaction is RX + glutathione = an S-substituted glutathione + a halide anion + H(+). Conjugation of reduced glutathione to a wide number of exogenous and endogenous hydrophobic electrophiles. May be involved in detoxification. The chain is Glutathione S-transferase D4 from Drosophila melanogaster (Fruit fly).